A 204-amino-acid chain; its full sequence is Cardiotrophin-2 (204 aa).

Positions 1–22 (MYCLLATPLCLLSLLLPPLSPA) are cleaved as a signal peptide. N-linked (GlcNAc...) asparagine glycosylation is present at Asn44.

Belongs to the IL-6 superfamily. Binds to tripartite CNTF receptor complex consisting of CNTF alpha chain, LIFR and IL6ST (in vitro). As to expression, not detected in adult tissues.

It is found in the secreted. Its function is as follows. Increases the platelet count associated with splenomegaly. May have an important role in neuronal precursor development and maturation. In Mus musculus (Mouse), this protein is Cardiotrophin-2 (Ctf2).